The sequence spans 163 residues: UPF0262 protein RPA4530 (163 aa).

Belongs to the UPF0262 family.

This is UPF0262 protein RPA4530 from Rhodopseudomonas palustris (strain ATCC BAA-98 / CGA009).